Reading from the N-terminus, the 217-residue chain is Somatotropin (217 aa).

The N-terminal stretch at 1–26 (MMAAGPRTSLLLAFALLCLPWTQVVG) is a signal peptide. Residue His46 participates in Zn(2+) binding. A disulfide bridge connects residues Cys79 and Cys190. Phosphoserine is present on Ser132. Residue Glu199 coordinates Zn(2+). Cys207 and Cys215 are joined by a disulfide.

The protein belongs to the somatotropin/prolactin family.

It is found in the secreted. Its function is as follows. Plays an important role in growth control. Its major role in stimulating body growth is to stimulate the liver and other tissues to secrete IGF1. It stimulates both the differentiation and proliferation of myoblasts. It also stimulates amino acid uptake and protein synthesis in muscle and other tissues. The polypeptide is Somatotropin (GH1) (Bos mutus grunniens (Wild yak)).